Reading from the N-terminus, the 476-residue chain is Bifunctional protein HldE (476 aa).

Residues 1–319 (MKPTLPNYDQ…EAIHGSQDSG (319 aa)) are ribokinase. 195–198 (NMLE) contacts ATP. Asp-264 is a catalytic residue. Positions 344 to 476 (MTNGCFDILH…IIEAIKGGRG (133 aa)) are cytidylyltransferase.

The protein in the N-terminal section; belongs to the carbohydrate kinase PfkB family. It in the C-terminal section; belongs to the cytidylyltransferase family. As to quaternary structure, homodimer.

It carries out the reaction D-glycero-beta-D-manno-heptose 7-phosphate + ATP = D-glycero-beta-D-manno-heptose 1,7-bisphosphate + ADP + H(+). It catalyses the reaction D-glycero-beta-D-manno-heptose 1-phosphate + ATP + H(+) = ADP-D-glycero-beta-D-manno-heptose + diphosphate. It functions in the pathway nucleotide-sugar biosynthesis; ADP-L-glycero-beta-D-manno-heptose biosynthesis; ADP-L-glycero-beta-D-manno-heptose from D-glycero-beta-D-manno-heptose 7-phosphate: step 1/4. Its pathway is nucleotide-sugar biosynthesis; ADP-L-glycero-beta-D-manno-heptose biosynthesis; ADP-L-glycero-beta-D-manno-heptose from D-glycero-beta-D-manno-heptose 7-phosphate: step 3/4. Functionally, catalyzes the phosphorylation of D-glycero-D-manno-heptose 7-phosphate at the C-1 position to selectively form D-glycero-beta-D-manno-heptose-1,7-bisphosphate. Its function is as follows. Catalyzes the ADP transfer from ATP to D-glycero-beta-D-manno-heptose 1-phosphate, yielding ADP-D-glycero-beta-D-manno-heptose. The sequence is that of Bifunctional protein HldE from Aliivibrio fischeri (strain ATCC 700601 / ES114) (Vibrio fischeri).